The chain runs to 166 residues: MDHGFYPTNLNGEGLRIGIVQARFNEPVCEALREACVAELEQLGVAGEDVLLVTVPGALEVPLALQKMAESGQFDALIALGAVIRGETYHFELVSNESGAGITRVGLDFNIAIANGILTTDTDAQAHARTREKGRDCARTAVEMANLTNDLDGLQDHGQDDDGENE.

5-amino-6-(D-ribitylamino)uracil-binding positions include F24, 58–60 (ALE), and 82–84 (AVI). 87–88 (ET) provides a ligand contact to (2S)-2-hydroxy-3-oxobutyl phosphate. H90 functions as the Proton donor in the catalytic mechanism. N115 is a 5-amino-6-(D-ribitylamino)uracil binding site. Residue R129 participates in (2S)-2-hydroxy-3-oxobutyl phosphate binding.

It belongs to the DMRL synthase family.

It catalyses the reaction (2S)-2-hydroxy-3-oxobutyl phosphate + 5-amino-6-(D-ribitylamino)uracil = 6,7-dimethyl-8-(1-D-ribityl)lumazine + phosphate + 2 H2O + H(+). It functions in the pathway cofactor biosynthesis; riboflavin biosynthesis; riboflavin from 2-hydroxy-3-oxobutyl phosphate and 5-amino-6-(D-ribitylamino)uracil: step 1/2. In terms of biological role, catalyzes the formation of 6,7-dimethyl-8-ribityllumazine by condensation of 5-amino-6-(D-ribitylamino)uracil with 3,4-dihydroxy-2-butanone 4-phosphate. This is the penultimate step in the biosynthesis of riboflavin. This Ralstonia pickettii (strain 12J) protein is 6,7-dimethyl-8-ribityllumazine synthase.